The sequence spans 1401 residues: DNA-directed RNA polymerase subunit beta'' (1401 aa).

Cysteine 224, cysteine 294, cysteine 301, and cysteine 304 together coordinate Zn(2+).

It belongs to the RNA polymerase beta' chain family. RpoC2 subfamily. As to quaternary structure, in plastids the minimal PEP RNA polymerase catalytic core is composed of four subunits: alpha, beta, beta', and beta''. When a (nuclear-encoded) sigma factor is associated with the core the holoenzyme is formed, which can initiate transcription. Zn(2+) serves as cofactor.

It is found in the plastid. The protein resides in the chloroplast. It catalyses the reaction RNA(n) + a ribonucleoside 5'-triphosphate = RNA(n+1) + diphosphate. DNA-dependent RNA polymerase catalyzes the transcription of DNA into RNA using the four ribonucleoside triphosphates as substrates. The polypeptide is DNA-directed RNA polymerase subunit beta'' (Nymphaea alba (White water-lily)).